Here is a 191-residue protein sequence, read N- to C-terminus: MIGRLSGVLLEKNPPQLLVDCNGVGYEVNVPMSTFYNLPGLGDKVVLLTHLTVREDAHILFGFGTNEERNVFKQLVKITGIGARTALSILSGMSVADLAQAITMQEAGRLTKIPGIGKKTAERLLLELKGKLGADLGVAGAVATDATSDILNALLALGYSDKEAMLALKQVPAGTGVSDGIKLALKSLSKA.

A domain I region spans residues 1-64 (MIGRLSGVLL…EDAHILFGFG (64 aa)). A domain II region spans residues 65-137 (TNEERNVFKQ…LKGKLGADLG (73 aa)). Residues 137–141 (GVAGA) are flexible linker. The segment at 142–191 (VATDATSDILNALLALGYSDKEAMLALKQVPAGTGVSDGIKLALKSLSKA) is domain III.

Belongs to the RuvA family. As to quaternary structure, homotetramer. Forms an RuvA(8)-RuvB(12)-Holliday junction (HJ) complex. HJ DNA is sandwiched between 2 RuvA tetramers; dsDNA enters through RuvA and exits via RuvB. An RuvB hexamer assembles on each DNA strand where it exits the tetramer. Each RuvB hexamer is contacted by two RuvA subunits (via domain III) on 2 adjacent RuvB subunits; this complex drives branch migration. In the full resolvosome a probable DNA-RuvA(4)-RuvB(12)-RuvC(2) complex forms which resolves the HJ.

The protein localises to the cytoplasm. Functionally, the RuvA-RuvB-RuvC complex processes Holliday junction (HJ) DNA during genetic recombination and DNA repair, while the RuvA-RuvB complex plays an important role in the rescue of blocked DNA replication forks via replication fork reversal (RFR). RuvA specifically binds to HJ cruciform DNA, conferring on it an open structure. The RuvB hexamer acts as an ATP-dependent pump, pulling dsDNA into and through the RuvAB complex. HJ branch migration allows RuvC to scan DNA until it finds its consensus sequence, where it cleaves and resolves the cruciform DNA. The sequence is that of Holliday junction branch migration complex subunit RuvA from Janthinobacterium sp. (strain Marseille) (Minibacterium massiliensis).